The chain runs to 350 residues: tRNA uridine(34) hydroxylase (350 aa).

Positions aspartate 146–leucine 240 constitute a Rhodanese domain. Cysteine 200 serves as the catalytic Cysteine persulfide intermediate.

It belongs to the TrhO family.

It carries out the reaction uridine(34) in tRNA + AH2 + O2 = 5-hydroxyuridine(34) in tRNA + A + H2O. Functionally, catalyzes oxygen-dependent 5-hydroxyuridine (ho5U) modification at position 34 in tRNAs, the first step in 5-carboxymethoxyuridine (cmo5U) biosynthesis. May be part of an alternate pathway, which is able to bypass cmo5U biogenesis in a subset of tRNAs under aerobic conditions. This is tRNA uridine(34) hydroxylase from Escherichia coli O17:K52:H18 (strain UMN026 / ExPEC).